We begin with the raw amino-acid sequence, 430 residues long: Long-chain specific acyl-CoA dehydrogenase, mitochondrial (430 aa).

The transit peptide at 1 to 30 (MAARLLLRSLRVLKARSAPRPPPSARCSHS) directs the protein to the mitochondrion. Residues 17 to 39 (SAPRPPPSARCSHSGAEARLETP) are disordered. An N6-acetyllysine modification is found at Lys-42. Phosphoserine occurs at positions 54 and 55. N6-acetyllysine; alternate is present on residues Lys-66 and Lys-81. N6-succinyllysine; alternate is present on residues Lys-66 and Lys-81. N6-acetyllysine is present on residues Lys-92 and Lys-95. At Lys-165 the chain carries N6-succinyllysine. 170-179 (IAMTEPGAGS) is a binding site for FAD. Ser-179 is a binding site for substrate. Phosphoserine is present on Ser-191. Residue 203–205 (FIT) participates in FAD binding. 227–228 (AH) contributes to the substrate binding site. Lys-240 bears the N6-succinyllysine mark. Lys-254 and Lys-279 each carry N6-acetyllysine; alternate. 2 positions are modified to N6-succinyllysine; alternate: Lys-254 and Lys-279. Substrate contacts are provided by residues Tyr-282 and 289–292 (PQER). Glu-291 functions as the Proton acceptor in the catalytic mechanism. An FAD-binding site is contributed by Arg-317. Lys-318 bears the N6-acetyllysine mark. Lys-322 bears the N6-acetyllysine; alternate mark. Residue Lys-322 is modified to N6-succinyllysine; alternate. Residue Gln-328 coordinates FAD. Lys-358 bears the N6-acetyllysine mark. Position 362 is a phosphoserine (Ser-362). 385-389 (QLHGG) lines the FAD pocket. Residue 412–413 (GG) participates in substrate binding. 414 to 416 (TNE) lines the FAD pocket.

It belongs to the acyl-CoA dehydrogenase family. As to quaternary structure, homotetramer. FAD is required as a cofactor. Post-translationally, acetylation at Lys-318 and Lys-322 in proximity of the cofactor-binding sites strongly reduces catalytic activity. These sites are deacetylated by SIRT3. Expressed in heart, skeletal muscle, kidney, and brain. Expressed in liver (at protein level).

The protein resides in the mitochondrion matrix. The catalysed reaction is a long-chain 2,3-saturated fatty acyl-CoA + oxidized [electron-transfer flavoprotein] + H(+) = a long-chain (2E)-enoyl-CoA + reduced [electron-transfer flavoprotein]. The enzyme catalyses oxidized [electron-transfer flavoprotein] + hexadecanoyl-CoA + H(+) = (2E)-hexadecenoyl-CoA + reduced [electron-transfer flavoprotein]. It carries out the reaction hexanoyl-CoA + oxidized [electron-transfer flavoprotein] + H(+) = (2E)-hexenoyl-CoA + reduced [electron-transfer flavoprotein]. It catalyses the reaction octanoyl-CoA + oxidized [electron-transfer flavoprotein] + H(+) = (2E)-octenoyl-CoA + reduced [electron-transfer flavoprotein]. The catalysed reaction is decanoyl-CoA + oxidized [electron-transfer flavoprotein] + H(+) = (2E)-decenoyl-CoA + reduced [electron-transfer flavoprotein]. The enzyme catalyses dodecanoyl-CoA + oxidized [electron-transfer flavoprotein] + H(+) = (2E)-dodecenoyl-CoA + reduced [electron-transfer flavoprotein]. It carries out the reaction tetradecanoyl-CoA + oxidized [electron-transfer flavoprotein] + H(+) = (2E)-tetradecenoyl-CoA + reduced [electron-transfer flavoprotein]. It catalyses the reaction octadecanoyl-CoA + oxidized [electron-transfer flavoprotein] + H(+) = (2E)-octadecenoyl-CoA + reduced [electron-transfer flavoprotein]. The catalysed reaction is eicosanoyl-CoA + oxidized [electron-transfer flavoprotein] + H(+) = (2E)-eicosenoyl-CoA + reduced [electron-transfer flavoprotein]. The enzyme catalyses docosanoyl-CoA + oxidized [electron-transfer flavoprotein] + H(+) = (2E)-docosenoyl-CoA + reduced [electron-transfer flavoprotein]. It carries out the reaction tetracosanoyl-CoA + oxidized [electron-transfer flavoprotein] + H(+) = (2E)-tetracosenoyl-CoA + reduced [electron-transfer flavoprotein]. It catalyses the reaction (5E)-tetradecenoyl-CoA + oxidized [electron-transfer flavoprotein] + H(+) = (2E,5E)-tetradecadienoyl-CoA + reduced [electron-transfer flavoprotein]. The catalysed reaction is (5Z)-tetradecenoyl-CoA + oxidized [electron-transfer flavoprotein] + H(+) = (2E,5Z)-tetradecadienoyl-CoA + reduced [electron-transfer flavoprotein]. The enzyme catalyses oxidized [electron-transfer flavoprotein] + (9Z)-octadecenoyl-CoA + H(+) = (2E,9Z)-octadecadienoyl-CoA + reduced [electron-transfer flavoprotein]. It functions in the pathway lipid metabolism; mitochondrial fatty acid beta-oxidation. Long-chain specific acyl-CoA dehydrogenase is one of the acyl-CoA dehydrogenases that catalyze the first step of mitochondrial fatty acid beta-oxidation, an aerobic process breaking down fatty acids into acetyl-CoA and allowing the production of energy from fats. The first step of fatty acid beta-oxidation consists in the removal of one hydrogen from C-2 and C-3 of the straight-chain fatty acyl-CoA thioester, resulting in the formation of trans-2-enoyl-CoA. Among the different mitochondrial acyl-CoA dehydrogenases, long-chain specific acyl-CoA dehydrogenase can act on saturated and unsaturated acyl-CoAs with 6 to 24 carbons with a preference for 8 to 18 carbons long primary chains. This chain is Long-chain specific acyl-CoA dehydrogenase, mitochondrial, found in Mus musculus (Mouse).